The chain runs to 398 residues: Elongation factor Tu (398 aa).

The tr-type G domain occupies 10–207 (KPHVNIGTIG…TADEYIPEPE (198 aa)). Residues 19–26 (GHVDHGKT) are G1. 19-26 (GHVDHGKT) contributes to the GTP binding site. Thr-26 contributes to the Mg(2+) binding site. A G2 region spans residues 63-67 (GITIN). Residues 84-87 (DAPG) form a G3 region. Residues 84 to 88 (DAPGH) and 139 to 142 (NKID) contribute to the GTP site. The tract at residues 139-142 (NKID) is G4. The segment at 177–179 (SAL) is G5.

The protein belongs to the TRAFAC class translation factor GTPase superfamily. Classic translation factor GTPase family. EF-Tu/EF-1A subfamily. Monomer.

It is found in the cytoplasm. It catalyses the reaction GTP + H2O = GDP + phosphate + H(+). In terms of biological role, GTP hydrolase that promotes the GTP-dependent binding of aminoacyl-tRNA to the A-site of ribosomes during protein biosynthesis. The polypeptide is Elongation factor Tu (Streptococcus uberis (strain ATCC BAA-854 / 0140J)).